The sequence spans 205 residues: uncharacterized protein (205 aa).

An HD domain is found at 26–129; the sequence is DWHHVSRVAD…VQDADRLDAI (104 aa).

This is an uncharacterized protein from Bacillus subtilis (strain 168).